The chain runs to 103 residues: ATP-dependent Clp protease adapter protein ClpS 2 (103 aa).

The protein belongs to the ClpS family. In terms of assembly, binds to the N-terminal domain of the chaperone ClpA.

In terms of biological role, involved in the modulation of the specificity of the ClpAP-mediated ATP-dependent protein degradation. In Agrobacterium fabrum (strain C58 / ATCC 33970) (Agrobacterium tumefaciens (strain C58)), this protein is ATP-dependent Clp protease adapter protein ClpS 2.